The primary structure comprises 799 residues: Putative mRNA-capping enzyme P5 (799 aa).

It belongs to the phytoreovirus protein P5 family.

The protein localises to the virion. It is found in the host cytoplasm. The catalysed reaction is a 5'-end diphospho-ribonucleoside in mRNA + GTP + H(+) = a 5'-end (5'-triphosphoguanosine)-ribonucleoside in mRNA + diphosphate. It functions in the pathway mRNA processing; mRNA capping. Functionally, enzyme involved in mRNA capping (Potential). Binds to GTP and might have guanylyltransferase activity. Together with the RNA-directed RNA polymerase P1 and protein P7, forms an transcriptional complex positioned near the channels situated at each of the five-fold vertices of the core. The polypeptide is Putative mRNA-capping enzyme P5 (Nephotettix cincticeps (Green rice leafhopper)).